Here is a 572-residue protein sequence, read N- to C-terminus: Delta-1-pyrroline-5-carboxylate dehydrogenase, mitochondrial (572 aa).

300–305 is a binding site for NAD(+); the sequence is GQISTR. Glu320 functions as the Proton acceptor in the catalytic mechanism. The active-site Nucleophile is Cys354.

The protein belongs to the aldehyde dehydrogenase family.

Its subcellular location is the mitochondrion matrix. It catalyses the reaction L-glutamate 5-semialdehyde + NAD(+) + H2O = L-glutamate + NADH + 2 H(+). It participates in amino-acid degradation; L-proline degradation into L-glutamate; L-glutamate from L-proline: step 2/2. The sequence is that of Delta-1-pyrroline-5-carboxylate dehydrogenase, mitochondrial (prnC) from Emericella nidulans (strain FGSC A4 / ATCC 38163 / CBS 112.46 / NRRL 194 / M139) (Aspergillus nidulans).